Here is an 82-residue protein sequence, read N- to C-terminus: Small ribosomal subunit protein bS16 (82 aa).

The protein belongs to the bacterial ribosomal protein bS16 family.

The sequence is that of Small ribosomal subunit protein bS16 from Caldanaerobacter subterraneus subsp. tengcongensis (strain DSM 15242 / JCM 11007 / NBRC 100824 / MB4) (Thermoanaerobacter tengcongensis).